The sequence spans 358 residues: Aminomethyltransferase (358 aa).

It belongs to the GcvT family. In terms of assembly, the glycine cleavage system is composed of four proteins: P, T, L and H.

The enzyme catalyses N(6)-[(R)-S(8)-aminomethyldihydrolipoyl]-L-lysyl-[protein] + (6S)-5,6,7,8-tetrahydrofolate = N(6)-[(R)-dihydrolipoyl]-L-lysyl-[protein] + (6R)-5,10-methylene-5,6,7,8-tetrahydrofolate + NH4(+). The glycine cleavage system catalyzes the degradation of glycine. The sequence is that of Aminomethyltransferase from Francisella tularensis subsp. holarctica (strain FTNF002-00 / FTA).